Consider the following 614-residue polypeptide: UvrABC system protein C (614 aa).

The GIY-YIG domain occupies 16–94 (SRPGVYRMFG…VKSLKPRFNV (79 aa)). The region spanning 204–239 (GELQKRLASEMEAASEAMEFETAARLRDRIRAIAHV) is the UVR domain.

Belongs to the UvrC family. Interacts with UvrB in an incision complex.

The protein localises to the cytoplasm. Its function is as follows. The UvrABC repair system catalyzes the recognition and processing of DNA lesions. UvrC both incises the 5' and 3' sides of the lesion. The N-terminal half is responsible for the 3' incision and the C-terminal half is responsible for the 5' incision. The protein is UvrABC system protein C of Hyphomonas neptunium (strain ATCC 15444).